The chain runs to 805 residues: Leucine--tRNA ligase (805 aa).

Positions 40-51 (PYPSGQGLHVGH) match the 'HIGH' region motif. A 'KMSKS' region motif is present at residues 577–581 (KMSKS). Lys-580 is an ATP binding site.

Belongs to the class-I aminoacyl-tRNA synthetase family.

The protein localises to the cytoplasm. It carries out the reaction tRNA(Leu) + L-leucine + ATP = L-leucyl-tRNA(Leu) + AMP + diphosphate. In Limosilactobacillus fermentum (strain NBRC 3956 / LMG 18251) (Lactobacillus fermentum), this protein is Leucine--tRNA ligase.